Here is a 187-residue protein sequence, read N- to C-terminus: ATP synthase subunit b (187 aa).

A helical transmembrane segment spans residues 31-51; it reads VAIMGLAIFVLFLILSYLLFN.

Belongs to the ATPase B chain family. F-type ATPases have 2 components, F(1) - the catalytic core - and F(0) - the membrane proton channel. F(1) has five subunits: alpha(3), beta(3), gamma(1), delta(1), epsilon(1). F(0) has three main subunits: a(1), b(2) and c(10-14). The alpha and beta chains form an alternating ring which encloses part of the gamma chain. F(1) is attached to F(0) by a central stalk formed by the gamma and epsilon chains, while a peripheral stalk is formed by the delta and b chains.

Its subcellular location is the cell membrane. Its function is as follows. F(1)F(0) ATP synthase produces ATP from ADP in the presence of a proton or sodium gradient. F-type ATPases consist of two structural domains, F(1) containing the extramembraneous catalytic core and F(0) containing the membrane proton channel, linked together by a central stalk and a peripheral stalk. During catalysis, ATP synthesis in the catalytic domain of F(1) is coupled via a rotary mechanism of the central stalk subunits to proton translocation. In terms of biological role, component of the F(0) channel, it forms part of the peripheral stalk, linking F(1) to F(0). This is ATP synthase subunit b from Lachnoclostridium phytofermentans (strain ATCC 700394 / DSM 18823 / ISDg) (Clostridium phytofermentans).